Reading from the N-terminus, the 339-residue chain is Glycerol-3-phosphate dehydrogenase [NAD(P)+] (339 aa).

Positions 15, 16, 36, and 110 each coordinate NADPH. Positions 110, 139, and 141 each coordinate sn-glycerol 3-phosphate. Alanine 143 contributes to the NADPH binding site. The sn-glycerol 3-phosphate site is built by lysine 195, aspartate 248, serine 258, arginine 259, and asparagine 260. Lysine 195 (proton acceptor) is an active-site residue. NADPH is bound at residue arginine 259. NADPH-binding residues include valine 283 and glutamate 285.

The protein belongs to the NAD-dependent glycerol-3-phosphate dehydrogenase family.

It is found in the cytoplasm. It carries out the reaction sn-glycerol 3-phosphate + NAD(+) = dihydroxyacetone phosphate + NADH + H(+). The enzyme catalyses sn-glycerol 3-phosphate + NADP(+) = dihydroxyacetone phosphate + NADPH + H(+). The protein operates within membrane lipid metabolism; glycerophospholipid metabolism. Catalyzes the reduction of the glycolytic intermediate dihydroxyacetone phosphate (DHAP) to sn-glycerol 3-phosphate (G3P), the key precursor for phospholipid synthesis. This Shigella dysenteriae serotype 1 (strain Sd197) protein is Glycerol-3-phosphate dehydrogenase [NAD(P)+].